A 168-amino-acid chain; its full sequence is Putative B3 domain-containing protein Os10g0158600 (168 aa).

A DNA-binding region (TF-B3) is located at residues 4–97 (VVFASARLNA…KARVMLLNRQ (94 aa)). Positions 105-151 (KTPSTTSSDKNRSLSPSDQLTRASTSAHPSTSKSIPPLRNGTGSTKR) are disordered. A compositionally biased stretch (polar residues) spans 106 to 138 (TPSTTSSDKNRSLSPSDQLTRASTSAHPSTSKS).

It localises to the nucleus. This Oryza sativa subsp. japonica (Rice) protein is Putative B3 domain-containing protein Os10g0158600.